A 152-amino-acid chain; its full sequence is Transcriptional regulator MraZ (152 aa).

SpoVT-AbrB domains follow at residues 5-52 (ASAI…PLHE) and 81-124 (AHEV…DEQA).

Belongs to the MraZ family. In terms of assembly, forms oligomers.

The protein resides in the cytoplasm. It localises to the nucleoid. The polypeptide is Transcriptional regulator MraZ (Shewanella sp. (strain MR-7)).